The chain runs to 171 residues: Transcription factor E (171 aa).

The region spanning 5–91 (DNKAVRGYIQ…LWKLDLDNSV (87 aa)) is the HTH TFE/IIEalpha-type domain.

It belongs to the TFE family. Monomer. Interaction with RNA polymerase subunits RpoF and RpoE is necessary for Tfe stimulatory transcription activity. Able to interact with Tbp and RNA polymerase in the absence of DNA promoter. Interacts both with the preinitiation and elongation complexes.

Functionally, transcription factor that plays a role in the activation of archaeal genes transcribed by RNA polymerase. Facilitates transcription initiation by enhancing TATA-box recognition by TATA-box-binding protein (Tbp), and transcription factor B (Tfb) and RNA polymerase recruitment. Not absolutely required for transcription in vitro, but particularly important in cases where Tbp or Tfb function is not optimal. It dynamically alters the nucleic acid-binding properties of RNA polymerases by stabilizing the initiation complex and destabilizing elongation complexes. Seems to translocate with the RNA polymerase following initiation and acts by binding to the non template strand of the transcription bubble in elongation complexes. This Methanocella arvoryzae (strain DSM 22066 / NBRC 105507 / MRE50) protein is Transcription factor E.